The chain runs to 429 residues: Adenylosuccinate synthetase (429 aa).

Residues 12-18 (GDEGKGK) and 40-42 (GHT) contribute to the GTP site. Aspartate 13 (proton acceptor) is an active-site residue. The Mg(2+) site is built by aspartate 13 and glycine 40. IMP contacts are provided by residues 13 to 16 (DEGK), 38 to 41 (NAGH), threonine 128, arginine 142, glutamine 223, threonine 238, and arginine 302. Histidine 41 acts as the Proton donor in catalysis. Residue 298 to 304 (TTTGRPR) coordinates substrate. GTP is bound by residues arginine 304, 330 to 332 (SID), and 412 to 414 (SVG).

Belongs to the adenylosuccinate synthetase family. As to quaternary structure, homodimer. Mg(2+) is required as a cofactor.

The protein localises to the cytoplasm. It catalyses the reaction IMP + L-aspartate + GTP = N(6)-(1,2-dicarboxyethyl)-AMP + GDP + phosphate + 2 H(+). It participates in purine metabolism; AMP biosynthesis via de novo pathway; AMP from IMP: step 1/2. In terms of biological role, plays an important role in the de novo pathway of purine nucleotide biosynthesis. Catalyzes the first committed step in the biosynthesis of AMP from IMP. The chain is Adenylosuccinate synthetase from Exiguobacterium sp. (strain ATCC BAA-1283 / AT1b).